The following is a 130-amino-acid chain: MTKQNPIADAMSAIKNAGDTGKLAVTVEPASRLFGDMLKVMQEYGYITGFEKIDDGRGGQFQIALSGGINKCGVITPRFSVKVEDLESWEIRYLPGKGFGIIILTTSKGVMSHEQARKLGVGGELLGYVF.

It belongs to the universal ribosomal protein uS8 family. In terms of assembly, part of the 30S ribosomal subunit.

Functionally, one of the primary rRNA binding proteins, it binds directly to 16S rRNA central domain where it helps coordinate assembly of the platform of the 30S subunit. The polypeptide is Small ribosomal subunit protein uS8 (Methanocorpusculum labreanum (strain ATCC 43576 / DSM 4855 / Z)).